Here is a 129-residue protein sequence, read N- to C-terminus: M-zodatoxin-Lt8d (129 aa).

The N-terminal stretch at 1–20 (MKYFVVALALVAAFACIAES) is a signal peptide. The propeptide occupies 21–60 (KPAESEHELAEVEEENELADLEDAVWLEHLADLSDLEEAR). The short motif at 57–60 (EEAR) is the Processing quadruplet motif element.

Post-translationally, cleavage of the propeptide depends on the processing quadruplet motif (XXXR, with at least one of X being E). In terms of tissue distribution, expressed by the venom gland.

It is found in the secreted. Functionally, insecticidal, cytolytic and antimicrobial peptide. Forms voltage-dependent, ion-permeable channels in membranes. At high concentration causes cell membrane lysis. This chain is M-zodatoxin-Lt8d (cit 1-4), found in Lachesana tarabaevi (Spider).